The chain runs to 109 residues: Large ribosomal subunit protein uL24 (109 aa).

The disordered stretch occupies residues K85 to Q109.

Belongs to the universal ribosomal protein uL24 family. Part of the 50S ribosomal subunit.

Functionally, one of two assembly initiator proteins, it binds directly to the 5'-end of the 23S rRNA, where it nucleates assembly of the 50S subunit. One of the proteins that surrounds the polypeptide exit tunnel on the outside of the subunit. The protein is Large ribosomal subunit protein uL24 of Mycoplasmoides gallisepticum (strain R(low / passage 15 / clone 2)) (Mycoplasma gallisepticum).